The chain runs to 505 residues: Serine carboxypeptidase-like 47 (505 aa).

The first 22 residues, 1–22 (MEAKTFFLFMLFIFSQSWLSTS), serve as a signal peptide directing secretion. N-linked (GlcNAc...) asparagine glycosylation is found at Asn37, Asn86, and Asn122. 3 disulfides stabilise this stretch: Cys138-Cys378, Cys306-Cys321, and Cys344-Cys349. Ser228 is a catalytic residue. An N-linked (GlcNAc...) asparagine glycan is attached at Asn301. Asp416 is a catalytic residue. 2 N-linked (GlcNAc...) asparagine glycosylation sites follow: Asn432 and Asn444. His473 is an active-site residue.

It belongs to the peptidase S10 family. As to expression, expressed in roots, flowers and siliques.

The protein localises to the secreted. Probable carboxypeptidase. The polypeptide is Serine carboxypeptidase-like 47 (SCPL47) (Arabidopsis thaliana (Mouse-ear cress)).